A 333-amino-acid chain; its full sequence is Dihydroorotate dehydrogenase (quinone) (333 aa).

Residues 56–60 (AGLDK) and threonine 80 each bind FMN. Lysine 60 provides a ligand contact to substrate. 105–109 (NRMGF) contacts substrate. FMN contacts are provided by asparagine 133 and asparagine 166. Asparagine 166 serves as a coordination point for substrate. Catalysis depends on serine 169, which acts as the Nucleophile. Asparagine 171 is a binding site for substrate. Lysine 211 and threonine 239 together coordinate FMN. 240-241 (NT) lines the substrate pocket. FMN contacts are provided by residues glycine 262, glycine 291, and 312–313 (YS).

The protein belongs to the dihydroorotate dehydrogenase family. Type 2 subfamily. Monomer. Requires FMN as cofactor.

Its subcellular location is the cell membrane. It catalyses the reaction (S)-dihydroorotate + a quinone = orotate + a quinol. It functions in the pathway pyrimidine metabolism; UMP biosynthesis via de novo pathway; orotate from (S)-dihydroorotate (quinone route): step 1/1. In terms of biological role, catalyzes the conversion of dihydroorotate to orotate with quinone as electron acceptor. The polypeptide is Dihydroorotate dehydrogenase (quinone) (Legionella pneumophila (strain Lens)).